The chain runs to 78 residues: MEEAKQKVVDFLNSKSGSKSKFYFNDFTDLFPDMKQREVKKILTALVNDEVLEYWSSGSTTMYGLKGAGKQAAAEHED.

It to A.fulgidus DsrD.

Functionally, may play an essential role in dissimilatory sulfite reduction. The chain is Protein DsvD (dsvD) from Nitratidesulfovibrio vulgaris (strain ATCC 29579 / DSM 644 / CCUG 34227 / NCIMB 8303 / VKM B-1760 / Hildenborough) (Desulfovibrio vulgaris).